A 316-amino-acid polypeptide reads, in one-letter code: Ribosomal RNA small subunit methyltransferase H (316 aa).

Residues 39–41 (GGH), Asp-56, Phe-82, Asp-103, and Gln-110 each bind S-adenosyl-L-methionine.

The protein belongs to the methyltransferase superfamily. RsmH family.

It is found in the cytoplasm. It catalyses the reaction cytidine(1402) in 16S rRNA + S-adenosyl-L-methionine = N(4)-methylcytidine(1402) in 16S rRNA + S-adenosyl-L-homocysteine + H(+). In terms of biological role, specifically methylates the N4 position of cytidine in position 1402 (C1402) of 16S rRNA. The polypeptide is Ribosomal RNA small subunit methyltransferase H (Methylacidiphilum infernorum (isolate V4) (Methylokorus infernorum (strain V4))).